The sequence spans 134 residues: uncharacterized protein (134 aa).

An N-terminal signal peptide occupies residues 1-23 (MWHLRCSNWRGSGVFGMCFSLSG). Residue C24 is the site of N-palmitoyl cysteine attachment. C24 carries S-diacylglycerol cysteine lipidation.

It is found in the cell membrane. This is an uncharacterized protein from Treponema pallidum (strain Nichols).